A 320-amino-acid chain; its full sequence is Lipoyl synthase (320 aa).

Residues cysteine 66, cysteine 71, cysteine 77, cysteine 92, cysteine 96, cysteine 99, and serine 306 each contribute to the [4Fe-4S] cluster site. Residues 77–295 (CFGHGTATFM…AEIGYAMGFS (219 aa)) form the Radical SAM core domain.

This sequence belongs to the radical SAM superfamily. Lipoyl synthase family. The cofactor is [4Fe-4S] cluster.

It is found in the cytoplasm. It carries out the reaction [[Fe-S] cluster scaffold protein carrying a second [4Fe-4S](2+) cluster] + N(6)-octanoyl-L-lysyl-[protein] + 2 oxidized [2Fe-2S]-[ferredoxin] + 2 S-adenosyl-L-methionine + 4 H(+) = [[Fe-S] cluster scaffold protein] + N(6)-[(R)-dihydrolipoyl]-L-lysyl-[protein] + 4 Fe(3+) + 2 hydrogen sulfide + 2 5'-deoxyadenosine + 2 L-methionine + 2 reduced [2Fe-2S]-[ferredoxin]. Its pathway is protein modification; protein lipoylation via endogenous pathway; protein N(6)-(lipoyl)lysine from octanoyl-[acyl-carrier-protein]: step 2/2. Functionally, catalyzes the radical-mediated insertion of two sulfur atoms into the C-6 and C-8 positions of the octanoyl moiety bound to the lipoyl domains of lipoate-dependent enzymes, thereby converting the octanoylated domains into lipoylated derivatives. The protein is Lipoyl synthase of Thioalkalivibrio sulfidiphilus (strain HL-EbGR7).